The chain runs to 156 residues: Enhancer of split M1 protein (156 aa).

Positions 1 to 19 (MMSQTLTLCCLALVACVYG) are cleaved as a signal peptide. Kazal-like domains are found at residues 23–81 (STND…AWCS) and 96–156 (KLEV…EEKC). 5 cysteine pairs are disulfide-bonded: cysteine 29–cysteine 62, cysteine 33–cysteine 55, cysteine 102–cysteine 135, cysteine 106–cysteine 128, and cysteine 114–cysteine 156.

The protein is Enhancer of split M1 protein (Kaz-m1) of Drosophila melanogaster (Fruit fly).